Consider the following 503-residue polypeptide: Maturase K (503 aa).

The protein belongs to the intron maturase 2 family. MatK subfamily.

Its subcellular location is the plastid. The protein resides in the chloroplast. Usually encoded in the trnK tRNA gene intron. Probably assists in splicing its own and other chloroplast group II introns. The sequence is that of Maturase K from Callistemon polandii (Gold-tipped bottlebrush).